The following is an 883-amino-acid chain: DNA mismatch repair protein MutS (883 aa).

602-609 serves as a coordination point for ATP; that stretch reads GPNMSGKS.

Belongs to the DNA mismatch repair MutS family.

Functionally, this protein is involved in the repair of mismatches in DNA. It is possible that it carries out the mismatch recognition step. This protein has a weak ATPase activity. This chain is DNA mismatch repair protein MutS, found in Staphylococcus haemolyticus (strain JCSC1435).